The primary structure comprises 576 residues: Formate--tetrahydrofolate ligase 1 (576 aa).

69–76 (TPLGEGKT) serves as a coordination point for ATP.

The protein belongs to the formate--tetrahydrofolate ligase family.

It carries out the reaction (6S)-5,6,7,8-tetrahydrofolate + formate + ATP = (6R)-10-formyltetrahydrofolate + ADP + phosphate. It functions in the pathway one-carbon metabolism; tetrahydrofolate interconversion. This chain is Formate--tetrahydrofolate ligase 1, found in Rubrobacter xylanophilus (strain DSM 9941 / JCM 11954 / NBRC 16129 / PRD-1).